The chain runs to 490 residues: AP-5 complex subunit mu-1 (490 aa).

In terms of domain architecture, MHD spans 206–476 (KPQVSISITE…LISSDYYIWN (271 aa)).

The protein belongs to the adaptor complexes medium subunit family. As to quaternary structure, probably part of the adaptor protein complex 5 (AP-5) a tetramer composed of AP5B1, AP5M1, AP5S1 and AP5Z1. Expressed in various tumor cell lines including Jurkat, Hep-G2 and HeLa.

Its subcellular location is the cytoplasm. The protein localises to the cytosol. The protein resides in the late endosome membrane. It localises to the lysosome membrane. In terms of biological role, as part of AP-5, a probable fifth adaptor protein complex it may be involved in endosomal transport. According to PubMed:18395520, it may play a role in cell death. The protein is AP-5 complex subunit mu-1 (AP5M1) of Homo sapiens (Human).